A 217-amino-acid chain; its full sequence is Adenylate kinase (217 aa).

Residue 10-15 (GAGKGT) participates in ATP binding. The segment at 30 to 59 (STGDMFRAAMKNETELGLKAKSYMDAGELV) is NMP. AMP contacts are provided by residues threonine 31, arginine 36, 57–59 (ELV), 85–88 (GFPR), and glutamine 92. The interval 126–163 (GRRVSPTSGRTYHVIFNPPKVEGICDVDGSELIQRDDD) is LID. Residues arginine 127 and 136–137 (TY) contribute to the ATP site. The AMP site is built by arginine 160 and arginine 171. Residue glutamine 199 coordinates ATP.

Belongs to the adenylate kinase family. As to quaternary structure, monomer.

Its subcellular location is the cytoplasm. It catalyses the reaction AMP + ATP = 2 ADP. It functions in the pathway purine metabolism; AMP biosynthesis via salvage pathway; AMP from ADP: step 1/1. Its function is as follows. Catalyzes the reversible transfer of the terminal phosphate group between ATP and AMP. Plays an important role in cellular energy homeostasis and in adenine nucleotide metabolism. The sequence is that of Adenylate kinase from Halalkalibacterium halodurans (strain ATCC BAA-125 / DSM 18197 / FERM 7344 / JCM 9153 / C-125) (Bacillus halodurans).